Reading from the N-terminus, the 90-residue chain is U7-theraphotoxin-Hhn1a 2 (90 aa).

The N-terminal stretch at M1–S19 is a signal peptide. A propeptide spanning residues F20–E50 is cleaved from the precursor. 3 cysteine pairs are disulfide-bonded: C51–C65, C58–C70, and C64–C81.

Belongs to the neurotoxin 10 (Hwtx-1) family. 13 (Hntx-13) subfamily. In terms of tissue distribution, expressed by the venom gland.

The protein localises to the secreted. Ion channel inhibitor. The polypeptide is U7-theraphotoxin-Hhn1a 2 (Cyriopagopus hainanus (Chinese bird spider)).